The following is a 965-amino-acid chain: Phosphoenolpyruvate carboxylase 1 (965 aa).

S11 carries the phosphoserine modification. H172 is a catalytic residue. Positions 283, 450, and 597 each coordinate D-glucose 6-phosphate. K600 is a catalytic residue. R635 provides a ligand contact to D-glucose 6-phosphate. R641 is an active-site residue. R641 contributes to the L-aspartate binding site. T665 lines the D-glucose 6-phosphate pocket. Residue Q673 coordinates L-aspartate. D-glucose 6-phosphate-binding positions include R753 and 767–769; that span reads RAI. L-aspartate is bound by residues K829, R888, and N963.

The protein belongs to the PEPCase type 1 family. In terms of assembly, homotetramer. Requires Mg(2+) as cofactor. In terms of tissue distribution, expressed in roots and stems and at low levels in leaves. Preferentially expressed in the phloem and in root tips.

It is found in the cytoplasm. It carries out the reaction oxaloacetate + phosphate = phosphoenolpyruvate + hydrogencarbonate. Activated by the allosteric regulator glucose-6-phosphate. Inhibited by malate and aspartate. Up regulated by light-reversible phosphorylation. Its function is as follows. Through the carboxylation of phosphoenolpyruvate (PEP) it forms oxaloacetate, a four-carbon dicarboxylic acid source for the tricarboxylic acid cycle. May be involved in phloem loading with sucrose and in anions and cations uptake and amino acid biosynthesis in roots. This chain is Phosphoenolpyruvate carboxylase 1, found in Flaveria trinervia (Clustered yellowtops).